The following is a 74-amino-acid chain: Large ribosomal subunit protein bL31 (74 aa).

Residues Cys16, Cys18, Cys38, and Cys41 each coordinate Zn(2+).

Belongs to the bacterial ribosomal protein bL31 family. Type A subfamily. In terms of assembly, part of the 50S ribosomal subunit. Zn(2+) serves as cofactor.

Functionally, binds the 23S rRNA. The polypeptide is Large ribosomal subunit protein bL31 (Mycolicibacterium vanbaalenii (strain DSM 7251 / JCM 13017 / BCRC 16820 / KCTC 9966 / NRRL B-24157 / PYR-1) (Mycobacterium vanbaalenii)).